Here is a 525-residue protein sequence, read N- to C-terminus: Probable protein kinase UbiB (525 aa).

In terms of domain architecture, Protein kinase spans 119-501; sequence RFDHHPVASA…QRRTNRLLSA (383 aa). Residues 125–133 and lysine 151 contribute to the ATP site; that span reads VASASIAQV. Aspartate 286 acts as the Proton acceptor in catalysis. A helical transmembrane segment spans residues 502 to 522; the sequence is ALLFIGGFAVGIIATHVLAWL.

The protein belongs to the ABC1 family. UbiB subfamily.

It is found in the cell inner membrane. It functions in the pathway cofactor biosynthesis; ubiquinone biosynthesis [regulation]. Its function is as follows. Is probably a protein kinase regulator of UbiI activity which is involved in aerobic coenzyme Q (ubiquinone) biosynthesis. This chain is Probable protein kinase UbiB, found in Ralstonia nicotianae (strain ATCC BAA-1114 / GMI1000) (Ralstonia solanacearum).